The primary structure comprises 344 residues: Anthranilate phosphoribosyltransferase (344 aa).

Residues Gly81, Gly84 to Asp85, Ser89, Asn91 to Thr94, Lys109 to Ser117, and Ala121 contribute to the 5-phospho-alpha-D-ribose 1-diphosphate site. Gly81 contributes to the anthranilate binding site. Mg(2+) is bound at residue Ser93. Position 112 (Asn112) interacts with anthranilate. Arg167 serves as a coordination point for anthranilate. Residues Asp226 and Glu227 each coordinate Mg(2+).

This sequence belongs to the anthranilate phosphoribosyltransferase family. In terms of assembly, homodimer. Mg(2+) is required as a cofactor.

The catalysed reaction is N-(5-phospho-beta-D-ribosyl)anthranilate + diphosphate = 5-phospho-alpha-D-ribose 1-diphosphate + anthranilate. The protein operates within amino-acid biosynthesis; L-tryptophan biosynthesis; L-tryptophan from chorismate: step 2/5. Catalyzes the transfer of the phosphoribosyl group of 5-phosphorylribose-1-pyrophosphate (PRPP) to anthranilate to yield N-(5'-phosphoribosyl)-anthranilate (PRA). The chain is Anthranilate phosphoribosyltransferase from Xanthobacter autotrophicus (strain ATCC BAA-1158 / Py2).